The primary structure comprises 336 residues: MAELKLGYKASAEQFAPRELVELAVAAEEHGMDSATVSDHFQPWRHEGGHAPFSLAWMTAVGERTTRLQLGTSVLTPTFRYNPAVIAQAFATMGCLYPDRIFLGVGTGEALNEIATGYEGEWPEFKERYARLRESVRLMRELWLGDRVDFEGEYYKTKGASIYDVPEGGIPIYIAAGGPQVAKYAGRAGDGFICTSGKGEELYKEKLIPAMREGAEAAGKNPDDVDRMIEIKISYDTDPELALENTRFWAPLSLTAEQKHSIDDPMEMEKAADELPIEQVAKRWIVASDPDEAVAKVADYVDYGLNHLVFHAPGHDQRRFLELFQRDLEPRLRKLG.

Asp-39 lines the coenzyme F420-(gamma-Glu)n pocket. The active-site Proton donor is His-40. Coenzyme F420-(gamma-Glu)n is bound by residues Thr-76 and 107–108 (TG). The active-site Proton acceptor is Glu-109. Residues Asn-112, 177-178 (GG), and 180-181 (QV) each bind coenzyme F420-(gamma-Glu)n. The substrate site is built by Thr-195, Lys-198, Lys-259, and Arg-283.

The protein belongs to the F420-dependent glucose-6-phosphate dehydrogenase family. In terms of assembly, homodimer.

The catalysed reaction is oxidized coenzyme F420-(gamma-L-Glu)(n) + D-glucose 6-phosphate + H(+) = 6-phospho-D-glucono-1,5-lactone + reduced coenzyme F420-(gamma-L-Glu)(n). In terms of biological role, catalyzes the coenzyme F420-dependent oxidation of glucose 6-phosphate (G6P) to 6-phosphogluconolactone. Appears to have a role in resistance to oxidative stress, via its consumption of G6P that serves as a source of reducing power to combat oxidative stress in mycobacteria. The chain is F420-dependent glucose-6-phosphate dehydrogenase from Mycolicibacterium gilvum (strain PYR-GCK) (Mycobacterium gilvum (strain PYR-GCK)).